Reading from the N-terminus, the 192-residue chain is dTTP/UTP pyrophosphatase (192 aa).

The Proton acceptor role is filled by D71.

It belongs to the Maf family. YhdE subfamily. It depends on a divalent metal cation as a cofactor.

The protein resides in the cytoplasm. The enzyme catalyses dTTP + H2O = dTMP + diphosphate + H(+). It catalyses the reaction UTP + H2O = UMP + diphosphate + H(+). Nucleoside triphosphate pyrophosphatase that hydrolyzes dTTP and UTP. May have a dual role in cell division arrest and in preventing the incorporation of modified nucleotides into cellular nucleic acids. The sequence is that of dTTP/UTP pyrophosphatase from Pseudoalteromonas atlantica (strain T6c / ATCC BAA-1087).